Consider the following 192-residue polypeptide: Thymidine kinase (192 aa).

ATP-binding positions include 9-16 (SAMNAGKS) and 87-90 (DECQ). Glu-88 functions as the Proton acceptor in the catalytic mechanism. Zn(2+)-binding residues include Cys-145, Cys-147, Cys-182, and His-185.

Belongs to the thymidine kinase family. Homotetramer.

It localises to the cytoplasm. The catalysed reaction is thymidine + ATP = dTMP + ADP + H(+). The sequence is that of Thymidine kinase from Vibrio parahaemolyticus serotype O3:K6 (strain RIMD 2210633).